A 372-amino-acid chain; its full sequence is DNA replication and repair protein RecF (372 aa).

30–37 (GENAQGKT) lines the ATP pocket.

Belongs to the RecF family.

The protein resides in the cytoplasm. Functionally, the RecF protein is involved in DNA metabolism; it is required for DNA replication and normal SOS inducibility. RecF binds preferentially to single-stranded, linear DNA. It also seems to bind ATP. The protein is DNA replication and repair protein RecF of Geobacillus thermodenitrificans (strain NG80-2).